Consider the following 92-residue polypeptide: Small ribosomal subunit protein uS19 (92 aa).

Belongs to the universal ribosomal protein uS19 family.

Protein S19 forms a complex with S13 that binds strongly to the 16S ribosomal RNA. The chain is Small ribosomal subunit protein uS19 from Buchnera aphidicola subsp. Acyrthosiphon pisum (strain 5A).